The sequence spans 1357 residues: DNA-directed RNA polymerase subunit beta (1357 aa).

The protein belongs to the RNA polymerase beta chain family. The RNAP catalytic core consists of 2 alpha, 1 beta, 1 beta' and 1 omega subunit. When a sigma factor is associated with the core the holoenzyme is formed, which can initiate transcription.

It catalyses the reaction RNA(n) + a ribonucleoside 5'-triphosphate = RNA(n+1) + diphosphate. Functionally, DNA-dependent RNA polymerase catalyzes the transcription of DNA into RNA using the four ribonucleoside triphosphates as substrates. The chain is DNA-directed RNA polymerase subunit beta from Pseudomonas entomophila (strain L48).